A 408-amino-acid chain; its full sequence is Arginine biosynthesis bifunctional protein ArgJ (408 aa).

Residues T162, K188, T199, E280, N403, and S408 each coordinate substrate. The Nucleophile role is filled by T199.

Belongs to the ArgJ family. Heterotetramer of two alpha and two beta chains.

It localises to the cytoplasm. The enzyme catalyses N(2)-acetyl-L-ornithine + L-glutamate = N-acetyl-L-glutamate + L-ornithine. It catalyses the reaction L-glutamate + acetyl-CoA = N-acetyl-L-glutamate + CoA + H(+). It participates in amino-acid biosynthesis; L-arginine biosynthesis; L-ornithine and N-acetyl-L-glutamate from L-glutamate and N(2)-acetyl-L-ornithine (cyclic): step 1/1. It functions in the pathway amino-acid biosynthesis; L-arginine biosynthesis; N(2)-acetyl-L-ornithine from L-glutamate: step 1/4. Its function is as follows. Catalyzes two activities which are involved in the cyclic version of arginine biosynthesis: the synthesis of N-acetylglutamate from glutamate and acetyl-CoA as the acetyl donor, and of ornithine by transacetylation between N(2)-acetylornithine and glutamate. The protein is Arginine biosynthesis bifunctional protein ArgJ of Ruegeria pomeroyi (strain ATCC 700808 / DSM 15171 / DSS-3) (Silicibacter pomeroyi).